The chain runs to 662 residues: MSENKFLPICKDDMIERGWEQCDFVLVTADAYIDHHSFGTAIISRVLENAGYKVGIIAQPDWKSVDDFKKLGRPRLGFLVNGGNMDPMVNHYTVSKKLRKKDLYTPKGEMGKRPDRATIVYCNKIREAYKDVNIVIGGIEASLRRFAHYDYWENKVRKSILVDSGADLLVYGMSEKQIVEVADFLNQGFDGKYIRHIPGTCYIADSLDEIYEEHIVLPSFKEVSSDKRTYAECFKIQYDEQDPVRGRTLVQEHNGKYVVINKPEMPLSREELDRVYALPYQKTYHPIYEKDGGIAAIEEVKFSLVSSRGCSGNCSFCAITFHQGRIVTSRSEDSIVEEAEEITKYDDFKGYIHDIGGPTANFRKPACKKQLTLGACKHKRCMSPGICKNMEVDHREYLHLLRRVRKLPGIKKVFIRSGLRYDYIMADKDDTFFKELVEHHVSGQLKVAPEHVSPNVLKYMGKPAGKTYDEFRRKFFRITERLGKKQFIIPYLMSSHPGCKLEDAIMLAEYLRDINYQPEQVQDFYPTPGTLSTTMFYTGLDPLTMEEVYIPRSKEEKAMQRALLQFKNPKNYNIVYDALVKAGREDLIGNGPKCLIRDKNSFGKGNNHSNHKSGGRKNRNENSGRRESEDKKRSSHSKKQRGNKSRGFDQKSQRGSKGKKRR.

The Radical SAM core domain occupies 296-567; that stretch reads AIEEVKFSLV…AMQRALLQFK (272 aa). 3 residues coordinate [4Fe-4S] cluster: C310, C314, and C317. The disordered stretch occupies residues 597-662; it reads RDKNSFGKGN…QRGSKGKKRR (66 aa). Residues 618 to 632 show a composition bias toward basic and acidic residues; sequence NRNENSGRRESEDKK. A compositionally biased stretch (basic residues) spans 633–644; sequence RSSHSKKQRGNK.

This sequence belongs to the UPF0313 family. The cofactor is [4Fe-4S] cluster.

The chain is UPF0313 protein CPE1196 from Clostridium perfringens (strain 13 / Type A).